We begin with the raw amino-acid sequence, 408 residues long: MRFKLADSLSLITVQLILATSTLALSNPGSSSQKHSPNPSAPSPKGISVPFFATLERLSRLVDIAYCIGTTGVRKPFNCVSRCNDFPSLSLINAWNTGPLLSDSCGYIAVDHGVAQHGDSGDLTAGEPAIVVAFRGTYSIANTIVDLSTVPQEYVPYPSPDHGGSEPPNEPEHTCTNCTVHMGFLQSWKNTRQFVLPQLRQLRLQYPSYPIQLVGHSLGGSVACLAALELKVSLGWENVIVTTFGEPRVGNEGLARFVDEVFYLNDDNNPEGREFRRVTHKEDPVPLLPLSEWGYKSHAGEVYITKQELTPSESDIYMCIGDNDPKCIAGADDSLWMTTRRLFHARNLWTASDKLAEPNGFPSRFKLWQLLFAHRDYFWRLGLCVPGGDPADWGRGRYQGLGPDTEEL.

A signal peptide spans 1–24 (MRFKLADSLSLITVQLILATSTLA). N177 is a glycosylation site (N-linked (GlcNAc...) asparagine). Catalysis depends on S217, which acts as the Nucleophile. Catalysis depends on residues D283 and H374.

This sequence belongs to the AB hydrolase superfamily. Lipase family. Class 3 subfamily.

Its subcellular location is the secreted. It carries out the reaction a monoacylglycerol + H2O = glycerol + a fatty acid + H(+). The catalysed reaction is a diacylglycerol + H2O = a monoacylglycerol + a fatty acid + H(+). Its function is as follows. Secreted mono- and diacylglycerol lipase involved in plant virulence. Has a substrate preference for p-nitrophenyl esters with a carbon chain length of C10 (p-nitrophenyl caprate). The sequence is that of Secreted mono- and diacylglycerol lipase 2 from Gibberella zeae (strain ATCC MYA-4620 / CBS 123657 / FGSC 9075 / NRRL 31084 / PH-1) (Wheat head blight fungus).